The sequence spans 1447 residues: ATP-dependent helicase SGS1 (1447 aa).

Disordered stretches follow at residues 37–78, 243–264, 342–430, 552–572, and 601–639; these read IANK…TATK, KKDG…QDDN, KEGA…EEKE, KENE…LSDS, and TERK…FDDD. Over residues 59–78 the composition is skewed to polar residues; the sequence is GTTNFITSIPASGPTNTATK. The span at 243-253 shows a compositional bias: basic and acidic residues; it reads KKDGMSKDQSK. Polar residues predominate over residues 254-264; that stretch reads GRSQVSSQDDN. Over residues 363-386 the composition is skewed to basic and acidic residues; the sequence is ELTRRRNMRSREPVNYRIPDRDDP. Acidic residues-rich tracts occupy residues 403 to 415 and 552 to 561; these read EREE…EAED and KENEDFEEDN. Positions 601–611 are enriched in basic and acidic residues; the sequence is TERKLTGDNEH. The Helicase ATP-binding domain occupies 687 to 864; that stretch reads VNATLQGKDV…IHNLELKEPV (178 aa). An ATP-binding site is contributed by 714–721; sequence AVVKSGKT. The DEAH box signature appears at 808–811; it reads DEAH. In terms of domain architecture, Helicase C-terminal spans 886–1035; that stretch reads TIFEICDAVK…NKEKHLNKLQ (150 aa). Positions 1272–1351 constitute an HRDC domain; the sequence is LNNLRMTYER…ADLSKKRSSE (80 aa). A compositionally biased stretch (polar residues) spans 1402 to 1411; it reads QIRQSQLPKN. Residues 1402-1447 form a disordered region; that stretch reads QIRQSQLPKNTTSSKSGTRSISKSSKKSANGRRGFRNYRGHYRGRK. Positions 1412–1424 are enriched in low complexity; sequence TTSSKSGTRSISK. Residues 1425 to 1447 show a composition bias toward basic residues; it reads SSKKSANGRRGFRNYRGHYRGRK.

This sequence belongs to the helicase family. RecQ subfamily. As to quaternary structure, heterodimer with TOP3. Forms a complex with TOP3 and RMI1. Forms a ternary complex with a MLH1-MLH3 heterodimer (MutLbeta) during meiosis. Interacts with TOP2. The cofactor is Mg(2+).

It localises to the nucleus. Its subcellular location is the nucleolus. It carries out the reaction Couples ATP hydrolysis with the unwinding of duplex DNA by translocating in the 3'-5' direction.. It catalyses the reaction ATP + H2O = ADP + phosphate + H(+). Helicase activity on G-quadruplex DNA is inhibited by ATP-gamma-S. ATP-dependent 3'-5' DNA helicase able to unwind duplex DNA or DNA:RNA heteroduplex. Unwinds G-quadruplex DNA; unwinding occurs in the 3'-5' direction, requires a 3' single-stranded end of at least 7 nucleotides. Helicase activity is higher on G-quadruplex substrates than on duplex DNA substrates. Assayed with a catalytic fragment (residues 400-1268). Telomeres and rDNA are notably G-rich; formation of G-quadruplex DNA would block DNA replication and transcription. Acts as an integral component of the S-phase checkpoint response, which arrests cells due to DNA damage or blocked fork progression during DNA replication. Can create a deleterious topological substrate that TOP3 preferentially resolves. The TOP3-SGS1 protein complex may function as a eukaryotic reverse gyrase introducing positive supercoils into extrachromosomal ribosomal DNA rings. Together with topoisomerase II has a role in chromosomal segregation. Maintains rDNA structure where it has a role in re-starting stalled replication forks. The protein is ATP-dependent helicase SGS1 of Saccharomyces cerevisiae (strain ATCC 204508 / S288c) (Baker's yeast).